Here is a 143-residue protein sequence, read N- to C-terminus: Nucleoside diphosphate kinase (143 aa).

Positions 11, 59, 87, 93, 104, and 114 each coordinate ATP. Histidine 117 serves as the catalytic Pros-phosphohistidine intermediate.

This sequence belongs to the NDK family. Homotetramer. Mg(2+) serves as cofactor.

The protein resides in the cytoplasm. The catalysed reaction is a 2'-deoxyribonucleoside 5'-diphosphate + ATP = a 2'-deoxyribonucleoside 5'-triphosphate + ADP. The enzyme catalyses a ribonucleoside 5'-diphosphate + ATP = a ribonucleoside 5'-triphosphate + ADP. Major role in the synthesis of nucleoside triphosphates other than ATP. The ATP gamma phosphate is transferred to the NDP beta phosphate via a ping-pong mechanism, using a phosphorylated active-site intermediate. The polypeptide is Nucleoside diphosphate kinase (Cronobacter sakazakii (strain ATCC BAA-894) (Enterobacter sakazakii)).